The following is a 132-amino-acid chain: D-ribose pyranase (132 aa).

H20 serves as the catalytic Proton donor. Residues D28, H99, and 121-123 (YSN) contribute to the substrate site.

Belongs to the RbsD / FucU family. RbsD subfamily. In terms of assembly, homodecamer.

Its subcellular location is the cytoplasm. The catalysed reaction is beta-D-ribopyranose = beta-D-ribofuranose. Its pathway is carbohydrate metabolism; D-ribose degradation; D-ribose 5-phosphate from beta-D-ribopyranose: step 1/2. Catalyzes the interconversion of beta-pyran and beta-furan forms of D-ribose. This Streptococcus agalactiae serotype Ia (strain ATCC 27591 / A909 / CDC SS700) protein is D-ribose pyranase.